We begin with the raw amino-acid sequence, 1412 residues long: DNA-directed RNA polymerase subunit beta' (1412 aa).

The Zn(2+) site is built by Cys-70, Cys-72, Cys-85, and Cys-88. Residues Asp-460, Asp-462, and Asp-464 each contribute to the Mg(2+) site. Residues Cys-819, Cys-893, Cys-900, and Cys-903 each coordinate Zn(2+). The disordered stretch occupies residues 1392-1412; it reads EEAFEFGTPSAPAEEPQHPAE.

It belongs to the RNA polymerase beta' chain family. As to quaternary structure, the RNAP catalytic core consists of 2 alpha, 1 beta, 1 beta' and 1 omega subunit. When a sigma factor is associated with the core the holoenzyme is formed, which can initiate transcription. Mg(2+) serves as cofactor. Requires Zn(2+) as cofactor.

The catalysed reaction is RNA(n) + a ribonucleoside 5'-triphosphate = RNA(n+1) + diphosphate. DNA-dependent RNA polymerase catalyzes the transcription of DNA into RNA using the four ribonucleoside triphosphates as substrates. This Burkholderia mallei (strain NCTC 10247) protein is DNA-directed RNA polymerase subunit beta'.